The following is a 581-amino-acid chain: Pectinesterase 3 (581 aa).

An N-terminal signal peptide occupies residues 1–55; it reads MDTIKSFKGYGKVNELEQQAYEKKTRKRLIIIAVSSIVLIAVIIAAVAGVVIHNR. N-linked (GlcNAc...) asparagine glycosylation is found at asparagine 101, asparagine 156, asparagine 200, asparagine 217, and asparagine 268. The substrate site is built by threonine 348 and glutamine 378. The active-site Proton donor is the aspartate 401. Cysteine 415 and cysteine 435 are joined by a disulfide. The Nucleophile role is filled by aspartate 422. Asparagine 477 carries N-linked (GlcNAc...) asparagine glycosylation. 2 residues coordinate substrate: arginine 486 and tryptophan 488.

In the N-terminal section; belongs to the PMEI family. It in the C-terminal section; belongs to the pectinesterase family.

The protein resides in the secreted. The protein localises to the cell wall. The enzyme catalyses [(1-&gt;4)-alpha-D-galacturonosyl methyl ester](n) + n H2O = [(1-&gt;4)-alpha-D-galacturonosyl](n) + n methanol + n H(+). It functions in the pathway glycan metabolism; pectin degradation; 2-dehydro-3-deoxy-D-gluconate from pectin: step 1/5. Functionally, may have roles in the deposition of pectin in developing tissues and in the wall loosening and cell separation that occurs in cell expansion, fruit ripening and abscission. This Phaseolus vulgaris (Kidney bean) protein is Pectinesterase 3 (MPE3).